A 45-amino-acid polypeptide reads, in one-letter code: Small, acid-soluble spore protein P (45 aa).

The segment covering 1–12 (MTERHTAKDIRK) has biased composition (basic and acidic residues). A disordered region spans residues 1–45 (MTERHTAKDIRKNAPKGENPGQPEPLSGSKKVKKRNHVSQTNGEG).

It belongs to the SspP family.

The protein localises to the spore core. The polypeptide is Small, acid-soluble spore protein P (Halalkalibacterium halodurans (strain ATCC BAA-125 / DSM 18197 / FERM 7344 / JCM 9153 / C-125) (Bacillus halodurans)).